Here is a 523-residue protein sequence, read N- to C-terminus: ATP synthase subunit alpha (523 aa).

An ATP-binding site is contributed by 179-186 (GDRQTGKT).

The protein belongs to the ATPase alpha/beta chains family. In terms of assembly, F-type ATPases have 2 components, CF(1) - the catalytic core - and CF(0) - the membrane proton channel. CF(1) has five subunits: alpha(3), beta(3), gamma(1), delta(1), epsilon(1). CF(0) has three main subunits: a(1), b(2) and c(9-12). The alpha and beta chains form an alternating ring which encloses part of the gamma chain. CF(1) is attached to CF(0) by a central stalk formed by the gamma and epsilon chains, while a peripheral stalk is formed by the delta and b chains.

The protein resides in the cell inner membrane. It carries out the reaction ATP + H2O + 4 H(+)(in) = ADP + phosphate + 5 H(+)(out). Produces ATP from ADP in the presence of a proton gradient across the membrane. The alpha chain is a regulatory subunit. This chain is ATP synthase subunit alpha, found in Vibrio vulnificus (strain YJ016).